The chain runs to 577 residues: Arginine--tRNA ligase (577 aa).

Positions 132–142 (ANPTGPLHVGH) match the 'HIGH' region motif.

The protein belongs to the class-I aminoacyl-tRNA synthetase family. Monomer.

It is found in the cytoplasm. It catalyses the reaction tRNA(Arg) + L-arginine + ATP = L-arginyl-tRNA(Arg) + AMP + diphosphate. The sequence is that of Arginine--tRNA ligase from Herminiimonas arsenicoxydans.